The following is a 209-amino-acid chain: Cytidylyl-2-hydroxypropylphosphonate hydrolase (209 aa).

A divalent metal cation is bound by residues Asn111, Asp127, Glu129, and Asp131. Catalysis depends on Lys144, which acts as the Proton donor. Asp145 is an a divalent metal cation binding site.

This sequence belongs to the FomD family. As to quaternary structure, monomer in solution. Mn(2+) serves as cofactor. The cofactor is Co(2+).

It catalyses the reaction cytidine 5'-({hydroxy[(S)-2-hydroxypropyl]phosphonoyl}phosphate) + H2O = (S)-2-hydroxypropylphosphonate + CMP + H(+). It participates in antibiotic biosynthesis; fosfomycin biosynthesis. Hydrolysis of (S)-HPP-CMP is inhibited by CDP. Its function is as follows. Involved in fosfomycin biosynthesis. Catalyzes the hydrolysis of cytidylyl (S)-2-hydroxypropylphosphonate ((S)-HPP-CMP) to give (S)-2-hydroxypropylphosphonate ((S)-HPP) and CMP. Can also hydrolyze (R)-HPP-CMP and cytidylyl 2-hydroxyethylphosphonate (HEP-CMP), which is a biosynthetic intermediate before C-methylation, but the catalytic efficiency is much higher with (S)-HPP-CMP. This Streptomyces wedmorensis protein is Cytidylyl-2-hydroxypropylphosphonate hydrolase.